The sequence spans 149 residues: Small ribosomal subunit protein uS19w (149 aa).

The protein belongs to the universal ribosomal protein uS19 family.

Its subcellular location is the cytoplasm. The polypeptide is Small ribosomal subunit protein uS19w (RPS15E) (Arabidopsis thaliana (Mouse-ear cress)).